A 192-amino-acid chain; its full sequence is Interleukin-18 (192 aa).

A propeptide spanning residues 1 to 35 is cleaved from the precursor; it reads MAAIPVDDCINFVGMKFIDNTLYFVADSDENLETD.

The protein belongs to the IL-1 family. In terms of assembly, forms a ternary complex with ligand-binding receptor subunit IL18R1 and signaling receptor subunit IL18RAP at the plasma membrane. Mature IL18 first binds to IL18R1 forming a low affinity binary complex, which then interacts with IL18RAP to form a high affinity ternary complex that signals inside the cell. Interacts with cargo receptor TMED10; the interaction mediates the translocation from the cytoplasm into the ERGIC (endoplasmic reticulum-Golgi intermediate compartment) and thereby secretion. In terms of processing, the pro-IL-18 precursor is processed by CASP1, CASP4 or CASP5 to yield its mature, active form. The pro-IL-18 precursor features autoinhibitory interactions between the propeptide and the post-cleavage-site region, preventing recognition by the IL18R1 receptor. Processing by CASP1, CASP4 or CASP5 induces conformational changes to generate critical receptor-binding sites. The mature form is then secreted and released in the extracellular milieu by passing through the gasdermin-D (GSDMD) pore. In contrast, cleavage by CASP3 inactivates IL18.

The protein resides in the cytoplasm. It is found in the cytosol. Its subcellular location is the secreted. Pro-inflammatory cytokine primarily involved in epithelial barrier repair, polarized T-helper 1 (Th1) cell and natural killer (NK) cell immune responses. Upon binding to IL18R1 and IL18RAP, forms a signaling ternary complex which activates NF-kappa-B, triggering synthesis of inflammatory mediators. Synergizes with IL12/interleukin-12 to induce IFNG synthesis from T-helper 1 (Th1) cells and natural killer (NK) cells. Involved in transduction of inflammation downstream of pyroptosis: its mature form is specifically released in the extracellular milieu by passing through the gasdermin-D (GSDMD) pore. This is Interleukin-18 (IL18) from Felis catus (Cat).